The following is a 151-amino-acid chain: Cytochrome c-type biogenesis protein CcmE 2 (151 aa).

The Cytoplasmic portion of the chain corresponds to 1–8 (MNPLRKKR). The chain crosses the membrane as a helical; Signal-anchor for type II membrane protein span at residues 9-29 (LVIILAILVGVGAAVGLALSA). Topologically, residues 30-151 (LQQNINLFYT…QSAPAPGKEG (122 aa)) are periplasmic. Residues H124 and Y128 each coordinate heme.

Belongs to the CcmE/CycJ family.

The protein localises to the cell inner membrane. In terms of biological role, heme chaperone required for the biogenesis of c-type cytochromes. Transiently binds heme delivered by CcmC and transfers the heme to apo-cytochromes in a process facilitated by CcmF and CcmH. The protein is Cytochrome c-type biogenesis protein CcmE 2 of Pseudomonas fluorescens (strain Pf0-1).